The sequence spans 425 residues: Meiotic recombination protein spo-11 (425 aa).

Positions 1 to 38 (MYEYSFNPNIDHEPGSVESQQSTIYSDSDDSDDSFLDD) are disordered. The 144-residue stretch at 15-158 (GSVESQQSTI…LNILSCGRGI (144 aa)) folds into the Topo IIA-type catalytic domain. The segment covering 27–38 (DSDDSDDSFLDD) has biased composition (acidic residues). Tyr119 functions as the O-(5'-phospho-DNA)-tyrosine intermediate in the catalytic mechanism. Residues Glu202 and Asp255 each contribute to the Mg(2+) site.

Belongs to the TOP6A family. The cofactor is Mg(2+).

It is found in the nucleus. It carries out the reaction ATP-dependent breakage, passage and rejoining of double-stranded DNA.. Its function is as follows. Required for meiotic recombination. Mediates DNA cleavage that forms the double-strand breaks (DSB) that initiate meiotic recombination. In Caenorhabditis elegans, this protein is Meiotic recombination protein spo-11 (spo-11).